The chain runs to 312 residues: Malate dehydrogenase (312 aa).

NAD(+) contacts are provided by residues 7–13 (GAAGGIG) and Asp34. 2 residues coordinate substrate: Arg81 and Arg87. NAD(+)-binding positions include Asn94 and 117-119 (ITN). Substrate-binding residues include Asn119 and Arg153. The active-site Proton acceptor is the His177. An NAD(+)-binding site is contributed by Met227.

Belongs to the LDH/MDH superfamily. MDH type 1 family. Homodimer.

The catalysed reaction is (S)-malate + NAD(+) = oxaloacetate + NADH + H(+). Its function is as follows. Catalyzes the reversible oxidation of malate to oxaloacetate. In Moritella sp. (strain 5710), this protein is Malate dehydrogenase (mdh).